Consider the following 475-residue polypeptide: Sulfate adenylyltransferase subunit 1 (475 aa).

A tr-type G domain is found at 25-240; that stretch reads KSLLRFLTCG…VLETVEVINL (216 aa). Residues 34 to 41 are G1; that stretch reads GSVDDGKS. 34–41 contacts GTP; sequence GSVDDGKS. The tract at residues 92 to 96 is G2; the sequence is GITID. The tract at residues 113–116 is G3; the sequence is DTPG. Residues 113–117 and 168–171 contribute to the GTP site; these read DTPGH and NKMD. The tract at residues 168 to 171 is G4; that stretch reads NKMD. The interval 206–208 is G5; sequence SAL.

Belongs to the TRAFAC class translation factor GTPase superfamily. Classic translation factor GTPase family. CysN/NodQ subfamily. Heterodimer composed of CysD, the smaller subunit, and CysN.

The catalysed reaction is sulfate + ATP + H(+) = adenosine 5'-phosphosulfate + diphosphate. It functions in the pathway sulfur metabolism; hydrogen sulfide biosynthesis; sulfite from sulfate: step 1/3. With CysD forms the ATP sulfurylase (ATPS) that catalyzes the adenylation of sulfate producing adenosine 5'-phosphosulfate (APS) and diphosphate, the first enzymatic step in sulfur assimilation pathway. APS synthesis involves the formation of a high-energy phosphoric-sulfuric acid anhydride bond driven by GTP hydrolysis by CysN coupled to ATP hydrolysis by CysD. In Sodalis glossinidius (strain morsitans), this protein is Sulfate adenylyltransferase subunit 1.